Reading from the N-terminus, the 949-residue chain is Translation initiation factor IF-2 (949 aa).

3 disordered regions span residues 61–122 (IQAN…PIIK), 139–159 (VENT…QKLQ), and 171–284 (LTQS…NKSH). Composition is skewed to basic and acidic residues over residues 112 to 122 (KKKEAPAPIIK) and 150 to 159 (QIEKAKQKLQ). A compositionally biased stretch (low complexity) spans 174 to 190 (SNTNTTNNANSASNVSN). The span at 191–208 (AKKEISEVKKQEQEIKRH) shows a compositional bias: basic and acidic residues. The segment covering 209 to 220 (ENIKRRTGFRVI) has biased composition (basic residues). Over residues 249-264 (EDIKKEWQEKDKQETK) the composition is skewed to basic and acidic residues. The tr-type G domain maps to 448–617 (ERPPVVTIMG…LIQADIMELK (170 aa)). Positions 457–464 (GHVDHGKT) are G1. 457-464 (GHVDHGKT) is a binding site for GTP. Positions 482 to 486 (GITQH) are G2. Residues 503–506 (DTPG) are G3. Residues 503-507 (DTPGH) and 557-560 (NKMD) contribute to the GTP site. Positions 557 to 560 (NKMD) are G4. The tract at residues 593-595 (SAK) is G5.

Belongs to the TRAFAC class translation factor GTPase superfamily. Classic translation factor GTPase family. IF-2 subfamily.

It is found in the cytoplasm. Its function is as follows. One of the essential components for the initiation of protein synthesis. Protects formylmethionyl-tRNA from spontaneous hydrolysis and promotes its binding to the 30S ribosomal subunits. Also involved in the hydrolysis of GTP during the formation of the 70S ribosomal complex. In Helicobacter pylori (strain J99 / ATCC 700824) (Campylobacter pylori J99), this protein is Translation initiation factor IF-2 (infB).